The sequence spans 304 residues: ATP phosphoribosyltransferase (304 aa).

Belongs to the ATP phosphoribosyltransferase family. Long subfamily. Requires Mg(2+) as cofactor.

Its subcellular location is the cytoplasm. It catalyses the reaction 1-(5-phospho-beta-D-ribosyl)-ATP + diphosphate = 5-phospho-alpha-D-ribose 1-diphosphate + ATP. Its pathway is amino-acid biosynthesis; L-histidine biosynthesis; L-histidine from 5-phospho-alpha-D-ribose 1-diphosphate: step 1/9. Its activity is regulated as follows. Feedback inhibited by histidine. Functionally, catalyzes the condensation of ATP and 5-phosphoribose 1-diphosphate to form N'-(5'-phosphoribosyl)-ATP (PR-ATP). Has a crucial role in the pathway because the rate of histidine biosynthesis seems to be controlled primarily by regulation of HisG enzymatic activity. The polypeptide is ATP phosphoribosyltransferase (Xanthomonas oryzae pv. oryzae (strain MAFF 311018)).